Reading from the N-terminus, the 679-residue chain is Protein hook (679 aa).

One can recognise a Calponin-homology (CH) domain in the interval 6 to 123 (NEMYYSLLEW…RLLQLVLGCA (118 aa)). Coiled-coil stretches lie at residues 135 to 437 (EIMC…LKCG) and 480 to 574 (QTAL…QEIL).

The protein belongs to the hook family. Homodimer. Interacts with microtubules via its N-terminus.

It is found in the cytoplasm. It localises to the cytoskeleton. The protein localises to the endosome. Its subcellular location is the synapse. In terms of biological role, involved in endocytic trafficking by stabilizing organelles of the endocytic pathway. Probably acts as a cytoskeletal linker protein required to tether endosome vesicles to the cytoskeleton. Involved in modulation of endocytosis at stages required for down-regulation of membrane proteins that control synapse size. Not involved in synaptic vesicle recycling. Required in R7 cells for boss endocytosis into multivesicular bodies (MVBs). Has a role in regulating adult longevity. In Drosophila yakuba (Fruit fly), this protein is Protein hook.